The following is a 491-amino-acid chain: Mitochondrial distribution and morphology protein 12 (491 aa).

Positions 1–491 (MSIDLNWEAA…VFPSYWTFLV (491 aa)) constitute an SMP-LTD domain. A compositionally biased stretch (acidic residues) spans 72-82 (ESDSSEDEDGE). 3 disordered regions span residues 72 to 123 (ESDS…NHHD), 201 to 313 (GWPD…MRER), and 389 to 434 (GDED…QPRR). Composition is skewed to basic and acidic residues over residues 83–123 (GHDA…NHHD) and 213–229 (MTDHTTGRTRREDHNKN). The segment covering 230–249 (ETGSPSRPSTAHTNPTQLSH) has biased composition (polar residues). The span at 252–262 (SAASSSNNTSN) shows a compositional bias: low complexity. A compositionally biased stretch (polar residues) spans 270–279 (DHTSSTTATT). The segment covering 400–421 (STANTTTAASGSSTDNNNNNNE) has biased composition (low complexity).

It belongs to the MDM12 family. As to quaternary structure, component of the ER-mitochondria encounter structure (ERMES) or MDM complex, composed of mmm1, mdm10, mdm12 and mdm34. A mmm1 homodimer associates with one molecule of mdm12 on each side in a pairwise head-to-tail manner, and the SMP-LTD domains of mmm1 and mdm12 generate a continuous hydrophobic tunnel for phospholipid trafficking.

It localises to the mitochondrion outer membrane. The protein localises to the endoplasmic reticulum membrane. Functionally, component of the ERMES/MDM complex, which serves as a molecular tether to connect the endoplasmic reticulum (ER) and mitochondria. Components of this complex are involved in the control of mitochondrial shape and protein biogenesis, and function in nonvesicular lipid trafficking between the ER and mitochondria. Mdm12 is required for the interaction of the ER-resident membrane protein mmm1 and the outer mitochondrial membrane-resident beta-barrel protein mdm10. The mdm12-mmm1 subcomplex functions in the major beta-barrel assembly pathway that is responsible for biogenesis of all mitochondrial outer membrane beta-barrel proteins, and acts in a late step after the SAM complex. The mdm10-mdm12-mmm1 subcomplex further acts in the TOM40-specific pathway after the action of the mdm12-mmm1 complex. Essential for establishing and maintaining the structure of mitochondria and maintenance of mtDNA nucleoids. The protein is Mitochondrial distribution and morphology protein 12 of Talaromyces stipitatus (strain ATCC 10500 / CBS 375.48 / QM 6759 / NRRL 1006) (Penicillium stipitatum).